Here is a 232-residue protein sequence, read N- to C-terminus: UPF0502 protein mma_2112 (232 aa).

The protein belongs to the UPF0502 family.

The chain is UPF0502 protein mma_2112 from Janthinobacterium sp. (strain Marseille) (Minibacterium massiliensis).